The sequence spans 279 residues: Formamidopyrimidine-DNA glycosylase (279 aa).

The Schiff-base intermediate with DNA role is filled by Pro2. Glu3 functions as the Proton donor in the catalytic mechanism. The active-site Proton donor; for beta-elimination activity is Lys57. DNA contacts are provided by His90, Arg109, and Arg151. The segment at 236-270 (FVYGRTGQPCRVCQTPIAVLRLGQRSTFYCPACQQ) adopts an FPG-type zinc-finger fold. The Proton donor; for delta-elimination activity role is filled by Arg260.

This sequence belongs to the FPG family. As to quaternary structure, monomer. Requires Zn(2+) as cofactor.

It catalyses the reaction Hydrolysis of DNA containing ring-opened 7-methylguanine residues, releasing 2,6-diamino-4-hydroxy-5-(N-methyl)formamidopyrimidine.. It carries out the reaction 2'-deoxyribonucleotide-(2'-deoxyribose 5'-phosphate)-2'-deoxyribonucleotide-DNA = a 3'-end 2'-deoxyribonucleotide-(2,3-dehydro-2,3-deoxyribose 5'-phosphate)-DNA + a 5'-end 5'-phospho-2'-deoxyribonucleoside-DNA + H(+). Involved in base excision repair of DNA damaged by oxidation or by mutagenic agents. Acts as a DNA glycosylase that recognizes and removes damaged bases. Has a preference for oxidized purines, such as 7,8-dihydro-8-oxoguanine (8-oxoG). Has AP (apurinic/apyrimidinic) lyase activity and introduces nicks in the DNA strand. Cleaves the DNA backbone by beta-delta elimination to generate a single-strand break at the site of the removed base with both 3'- and 5'-phosphates. The protein is Formamidopyrimidine-DNA glycosylase of Methylobacillus flagellatus (strain ATCC 51484 / DSM 6875 / VKM B-1610 / KT).